We begin with the raw amino-acid sequence, 437 residues long: Trigger factor (437 aa).

Residues 163 to 248 (SDRVIIDFEG…LNNVSEATLP (86 aa)) enclose the PPIase FKBP-type domain.

It belongs to the FKBP-type PPIase family. Tig subfamily.

Its subcellular location is the cytoplasm. The enzyme catalyses [protein]-peptidylproline (omega=180) = [protein]-peptidylproline (omega=0). In terms of biological role, involved in protein export. Acts as a chaperone by maintaining the newly synthesized protein in an open conformation. Functions as a peptidyl-prolyl cis-trans isomerase. The polypeptide is Trigger factor (Neisseria meningitidis serogroup C / serotype 2a (strain ATCC 700532 / DSM 15464 / FAM18)).